The sequence spans 190 residues: UPF0340 protein BT9727_4999 (190 aa).

The protein belongs to the UPF0340 family.

In Bacillus thuringiensis subsp. konkukian (strain 97-27), this protein is UPF0340 protein BT9727_4999.